The sequence spans 191 residues: Cell division protein SepF (191 aa).

The span at 156-167 (EEASPSNMSNKG) shows a compositional bias: polar residues. Positions 156-191 (EEASPSNMSNKGNDLISKETSPAPEPAWGETVATAL) are disordered.

It belongs to the SepF family. In terms of assembly, homodimer. Interacts with FtsZ.

It localises to the cytoplasm. Its function is as follows. Cell division protein that is part of the divisome complex and is recruited early to the Z-ring. Probably stimulates Z-ring formation, perhaps through the cross-linking of FtsZ protofilaments. Its function overlaps with FtsA. The polypeptide is Cell division protein SepF (Prochlorococcus marinus (strain NATL1A)).